Here is a 1248-residue protein sequence, read N- to C-terminus: Probable serine/threonine-protein kinase DDB_G0278509 (1248 aa).

Disordered stretches follow at residues 1–26 (MSKVIGYIDYGDPDGNEEPSKQNGEY), 40–61 (SVNGGYDKDNNNHHHHNQEEDY), 100–125 (QSYKLSNSGESMNRSINQSKEEDHLE), 180–220 (QNNN…TKNN), and 235–338 (SIDS…NNNK). Polar residues predominate over residues 102 to 117 (YKLSNSGESMNRSINQ). The segment covering 181 to 216 (NNNNNNSNSNSNSNSNSNNNNNNNNNNNNNNNNNNN) has biased composition (low complexity). LRR repeat units follow at residues 386-407 (SSTELDLSEQELNEFPIFDEKE), 411-432 (GYKIIDLSFNNIKSIPLDAFTN), 435-457 (NLEQLIMFNNNLSDVPSSIEFLK), 458-480 (HLTILDLSHNNLHEICRELGNLS), 481-502 (FLRELYLSNNSLKKFPTTGNLY), 503-524 (NLKKLILDNNQITTIPIECVEP), 527-548 (QLQTLDLSFNKIGTITSSTTTT), 572-593 (NLKQLNLSHNELQEIPSSLRHL), 595-616 (KLHSLSIDYNQISVLPDKVVAS), 619-641 (RLAKLTISNNKIKQLPFAINNLS), 642-663 (SLIELNASNNVIELLPDSICYL), 665-687 (NLKKLNLNNNNLKELPSNIGFLT), and 688-708 (KLVDLQLYNNQISSLPISFLK). Residues 825-873 (YPFQKLDPIPQSLYSSSNPRSHTESDIQKLKNNDETITTTNSSISTTSS) form a disordered region. A compositionally biased stretch (basic and acidic residues) spans 845–858 (SHTESDIQKLKNND). Residues 860–873 (TITTTNSSISTTSS) show a composition bias toward low complexity. Positions 946–1239 (IQFFNLIGQG…SIYHRLENLM (294 aa)) constitute a Protein kinase domain. Residues 952–960 (IGQGGFSKV) and Lys973 each bind ATP. Catalysis depends on Asp1069, which acts as the Proton acceptor. The disordered stretch occupies residues 1106-1135 (NNTNNTATSSTTTSSANGANSISNNNNNGT).

Belongs to the protein kinase superfamily. TKL Ser/Thr protein kinase family.

The catalysed reaction is L-seryl-[protein] + ATP = O-phospho-L-seryl-[protein] + ADP + H(+). The enzyme catalyses L-threonyl-[protein] + ATP = O-phospho-L-threonyl-[protein] + ADP + H(+). This chain is Probable serine/threonine-protein kinase DDB_G0278509, found in Dictyostelium discoideum (Social amoeba).